Consider the following 146-residue polypeptide: uncharacterized protein (146 aa).

One can recognise an HTH marR-type domain in the interval M1 to K137.

This is an uncharacterized protein from Staphylococcus aureus (strain MW2).